The primary structure comprises 486 residues: Ribulose bisphosphate carboxylase large chain, plasmid (486 aa).

Substrate is bound by residues asparagine 126 and threonine 176. Lysine 178 serves as the catalytic Proton acceptor. A substrate-binding site is contributed by lysine 180. Mg(2+) is bound by residues lysine 204, aspartate 206, and glutamate 207. Lysine 204 is modified (N6-carboxylysine). The active-site Proton acceptor is histidine 296. Arginine 297, histidine 329, and serine 381 together coordinate substrate.

The protein belongs to the RuBisCO large chain family. Type I subfamily. As to quaternary structure, heterohexadecamer of 8 large chains and 8 small chains. Mg(2+) is required as a cofactor.

The enzyme catalyses 2 (2R)-3-phosphoglycerate + 2 H(+) = D-ribulose 1,5-bisphosphate + CO2 + H2O. It carries out the reaction D-ribulose 1,5-bisphosphate + O2 = 2-phosphoglycolate + (2R)-3-phosphoglycerate + 2 H(+). Its function is as follows. RuBisCO catalyzes two reactions: the carboxylation of D-ribulose 1,5-bisphosphate, the primary event in carbon dioxide fixation, as well as the oxidative fragmentation of the pentose substrate. Both reactions occur simultaneously and in competition at the same active site. The chain is Ribulose bisphosphate carboxylase large chain, plasmid (cbbL2) from Cupriavidus necator (strain ATCC 17699 / DSM 428 / KCTC 22496 / NCIMB 10442 / H16 / Stanier 337) (Ralstonia eutropha).